We begin with the raw amino-acid sequence, 734 residues long: Ribosomal RNA large subunit methyltransferase K/L (734 aa).

The THUMP domain occupies 49 to 167; the sequence is QAYRVCMWSR…KTEHTYCLDL (119 aa).

The protein belongs to the methyltransferase superfamily. RlmKL family.

The protein resides in the cytoplasm. The enzyme catalyses guanosine(2445) in 23S rRNA + S-adenosyl-L-methionine = N(2)-methylguanosine(2445) in 23S rRNA + S-adenosyl-L-homocysteine + H(+). It carries out the reaction guanosine(2069) in 23S rRNA + S-adenosyl-L-methionine = N(2)-methylguanosine(2069) in 23S rRNA + S-adenosyl-L-homocysteine + H(+). Functionally, specifically methylates the guanine in position 2445 (m2G2445) and the guanine in position 2069 (m7G2069) of 23S rRNA. The sequence is that of Ribosomal RNA large subunit methyltransferase K/L from Acinetobacter baylyi (strain ATCC 33305 / BD413 / ADP1).